The sequence spans 121 residues: Small ribosomal subunit protein uS13 (121 aa).

Residues 94-121 form a disordered region; sequence GLPLRGQRTRTNARTRKGPRRAAQALKK.

This sequence belongs to the universal ribosomal protein uS13 family. Part of the 30S ribosomal subunit. Forms a loose heterodimer with protein S19. Forms two bridges to the 50S subunit in the 70S ribosome.

In terms of biological role, located at the top of the head of the 30S subunit, it contacts several helices of the 16S rRNA. In the 70S ribosome it contacts the 23S rRNA (bridge B1a) and protein L5 of the 50S subunit (bridge B1b), connecting the 2 subunits; these bridges are implicated in subunit movement. Contacts the tRNAs in the A and P-sites. This chain is Small ribosomal subunit protein uS13, found in Burkholderia mallei (strain NCTC 10247).